A 410-amino-acid polypeptide reads, in one-letter code: Cytochrome P450(MEG) (410 aa).

Residue Cys-355 coordinates heme.

This sequence belongs to the cytochrome P450 family. Heme is required as a cofactor.

Its subcellular location is the cytoplasm. The enzyme catalyses reduced 2[4Fe-4S]-[ferredoxin] + progesterone + O2 + 2 H(+) = 15beta-hydroxyprogesterone + oxidized 2[4Fe-4S]-[ferredoxin] + H2O. In terms of biological role, has the capacity to hydroxylate certain steroids in the 15-beta position. Also hydroxylates progesterone in the 11-alpha and 9-beta position. In Priestia megaterium (Bacillus megaterium), this protein is Cytochrome P450(MEG) (cyp106A2).